A 514-amino-acid chain; its full sequence is MAMPRNLPGQAAHDEADQEILRLDGIRKRFPGVLALDGIRLDLRRGEVHAVCGENGAGKSTLMKIISGQYLPDEGAVHYRGAPVRFRSASEAQAAGISIIHQELNLVPHLSVAENLFLAREPRRGPFVDTKRMNAEAARCIARIGLNVAPTTKVGVLSIAQQQMVEIAKALSHDARVLIMDEPTSSLTEAETVQLFRIIEELRADGVAILYISHRLDEMAQIVDRVTVLRDGRHISTDDFADVSIDDIVARMVGRTLDDAYPSRQSVPTDDVLLDVRDLRRDGVFGPVSFALRRGEILGFAGLMGAGRTEIARAIFGADRPDGGTIALHGRPVTIRSPREAIRHGIAYLSEDRKKEGLALPMPVAANLTLANVRGIASRFGFLRFDDEIDVARRYVQDLAIRTPSVHQRVRNLSGGNQQKVVIGKWLYRGSKILFFDEPTRGIDVGAKFAIYGLMDRLAADGVGVVLISSELPELLGMTDRIAVFHEGRMTAILDTKHTSQEEIMHYASGRSHA.

2 ABC transporter domains span residues 21 to 256 (LRLD…VGRT) and 267 to 512 (VPTD…SGRS). 53–60 (GENGAGKS) is an ATP binding site.

It belongs to the ABC transporter superfamily. Carbohydrate importer 2 (CUT2) (TC 3.A.1.2) family.

The protein localises to the cell inner membrane. The catalysed reaction is D-ribose(out) + ATP + H2O = D-ribose(in) + ADP + phosphate + H(+). It catalyses the reaction D-galactose(out) + ATP + H2O = D-galactose(in) + ADP + phosphate + H(+). Part of an ABC transporter complex involved in carbohydrate import. Could be involved in ribose, galactose and/or methyl galactoside import. Responsible for energy coupling to the transport system. In Burkholderia cenocepacia (strain HI2424), this protein is Putative ribose/galactose/methyl galactoside import ATP-binding protein 3.